A 589-amino-acid polypeptide reads, in one-letter code: MSVSVHENRKSRASSGSINIYLFHKSSYADSVLTHLNLLRQQRLFTDVLLHAGNRTFPCHRAVLAACSRYFEAMFSGGLKESQDSEVNFDNSIHPEVLELLLDYAYSSRVIINEENAESLLEAGDMLEFQDIRDACAEFLEKNLHPTNCLGMLLLSDAHQCTKLYELSWRMCLSNFQTIRKNEDFLQLPQDMVVQLLSSEELETEDERLVYESAINWISYDLKKRYCYLPELLQTVRLALLPAIYLMENVAMEELITKQRKSKEIVEEAIRCKLKILQNDGVVTSLCARPRKTGHALFLLGGQTFMCDKLYLVDQKAKEIIPKADIPSPRKEFSACAIGCKVYITGGRGSENGVSKDVWVYDTLHEEWSKAAPMLVARFGHGSAELKHCLYVVGGHTAATGCLPASPSVSLKQVEHYDPTINKWTMVAPLREGVSNAAVVSAKLKLFAFGGTSVSHDKLPKVQCYDQCENRWTVPATCPQPWRYTAAAVLGNQIFIMGGDTEFSACSAYKFNSETYQWTKVGDVTAKRMSCHAVASGNKLYVVGGYFGIQRCKTLDCYDPTLDVWNSITTVPYSLIPTAFVSTWKHLPS.

Residues 46-114 (TDVLLHAGNR…AYSSRVIINE (69 aa)) form the BTB domain. Kelch repeat units lie at residues 296 to 340 (ALFL…AIGC), 341 to 388 (KVYI…ELKH), 389 to 444 (CLYV…SAKL), 446 to 492 (LFAF…VLGN), 494 to 538 (IFIM…ASGN), and 539 to 585 (KLYV…STWK).

As to quaternary structure, binds to RB1. Hypophosphorylated RB1 associates with ENC1 during neuronal differentiation, while hyperphosphorylated RB1 associates with ENC1 in undifferentiating cells. Part of a complex that contains CUL3, RBX1 and ENC1. Interacts indirectly with KEAP1. Ubiquitinated by E3 ubiquitin ligase complex formed by CUL3 and RBX1 and probably targeted for proteasome-independent degradation. Quinone-induced oxidative stress increases its ubiquitination. In terms of tissue distribution, detected in fetal brain tissue, moderate expression in fetal heart, lung and kidney. Highly expressed in adult brain, particularly high in the hippocampus and amygdala, and spinal cord. Detectable in adult pancreas. May be down-regulated in neuroblastoma tumors.

Its subcellular location is the nucleus matrix. The protein resides in the cytoplasm. It localises to the cytoskeleton. Its function is as follows. Actin-binding protein involved in the regulation of neuronal process formation and in differentiation of neural crest cells. Down-regulates transcription factor NF2L2/NRF2 by decreasing the rate of protein synthesis and not via a ubiquitin-mediated proteasomal degradation mechanism. In Homo sapiens (Human), this protein is Ectoderm-neural cortex protein 1 (ENC1).